The following is a 319-amino-acid chain: Ribonuclease Z (319 aa).

7 residues coordinate Zn(2+): histidine 62, histidine 64, aspartate 66, histidine 67, histidine 145, aspartate 215, and histidine 273. The active-site Proton acceptor is the aspartate 66.

The protein belongs to the RNase Z family. In terms of assembly, homodimer. Requires Zn(2+) as cofactor.

It carries out the reaction Endonucleolytic cleavage of RNA, removing extra 3' nucleotides from tRNA precursor, generating 3' termini of tRNAs. A 3'-hydroxy group is left at the tRNA terminus and a 5'-phosphoryl group is left at the trailer molecule.. Its function is as follows. Zinc phosphodiesterase, which displays some tRNA 3'-processing endonuclease activity. Probably involved in tRNA maturation, by removing a 3'-trailer from precursor tRNA. In Borreliella afzelii (strain PKo) (Borrelia afzelii), this protein is Ribonuclease Z.